Reading from the N-terminus, the 146-residue chain is Globin-1 (146 aa).

In terms of domain architecture, Globin spans 9-146; sequence QLTADVKKDL…KLVAVVQAAL (138 aa). Position 101 (histidine 101) interacts with heme b.

This sequence belongs to the globin family. Homodimer.

The protein resides in the cytoplasm. This is Globin-1 from Anadara broughtonii (Blood clam).